Consider the following 399-residue polypeptide: Argininosuccinate synthase (399 aa).

Position 8-16 (8-16 (AYSGGLDTS)) interacts with ATP. L-citrulline is bound at residue tyrosine 87. Glycine 117 is a binding site for ATP. Residues threonine 119, asparagine 123, and aspartate 124 each coordinate L-aspartate. Asparagine 123 is an L-citrulline binding site. Residues arginine 127, serine 175, glutamate 260, and tyrosine 272 each coordinate L-citrulline.

Belongs to the argininosuccinate synthase family. Type 1 subfamily. As to quaternary structure, homotetramer.

Its subcellular location is the cytoplasm. It carries out the reaction L-citrulline + L-aspartate + ATP = 2-(N(omega)-L-arginino)succinate + AMP + diphosphate + H(+). It participates in amino-acid biosynthesis; L-arginine biosynthesis; L-arginine from L-ornithine and carbamoyl phosphate: step 2/3. The protein is Argininosuccinate synthase of Mycolicibacterium smegmatis (strain ATCC 700084 / mc(2)155) (Mycobacterium smegmatis).